A 238-amino-acid polypeptide reads, in one-letter code: ATP synthase subunit a (238 aa).

The next 5 helical transmembrane spans lie at 17–37 (LSDM…AVAA), 75–95 (FLTL…LGLP), 112–132 (DATV…YYGV), 179–199 (ILLG…AVGA), and 202–222 (FPIM…AFIF).

This sequence belongs to the ATPase A chain family. In terms of assembly, F-type ATPases have 2 components, CF(1) - the catalytic core - and CF(0) - the membrane proton channel. CF(1) has five subunits: alpha(3), beta(3), gamma(1), delta(1), epsilon(1). CF(0) has three main subunits: a(1), b(2) and c(9-12). The alpha and beta chains form an alternating ring which encloses part of the gamma chain. CF(1) is attached to CF(0) by a central stalk formed by the gamma and epsilon chains, while a peripheral stalk is formed by the delta and b chains.

It localises to the cell membrane. Its function is as follows. Key component of the proton channel; it plays a direct role in the translocation of protons across the membrane. The polypeptide is ATP synthase subunit a (Bacillus sp. (strain PS3)).